The primary structure comprises 341 residues: Methionine import ATP-binding protein MetN 1 (341 aa).

The ABC transporter domain maps to 2-241 (IEFRQVSKTF…PKTTIAQNFV (240 aa)). An ATP-binding site is contributed by 38–45 (GYSGAGKS).

Belongs to the ABC transporter superfamily. Methionine importer (TC 3.A.1.24) family. The complex is composed of two ATP-binding proteins (MetN), two transmembrane proteins (MetI) and a solute-binding protein (MetQ).

It is found in the cell membrane. It carries out the reaction L-methionine(out) + ATP + H2O = L-methionine(in) + ADP + phosphate + H(+). It catalyses the reaction D-methionine(out) + ATP + H2O = D-methionine(in) + ADP + phosphate + H(+). Functionally, part of the ABC transporter complex MetNIQ involved in methionine import. Responsible for energy coupling to the transport system. This Staphylococcus aureus (strain USA300) protein is Methionine import ATP-binding protein MetN 1.